The primary structure comprises 139 residues: Large ribosomal subunit protein bL17 (139 aa).

This sequence belongs to the bacterial ribosomal protein bL17 family. Part of the 50S ribosomal subunit. Contacts protein L32.

This Sphingopyxis alaskensis (strain DSM 13593 / LMG 18877 / RB2256) (Sphingomonas alaskensis) protein is Large ribosomal subunit protein bL17.